Reading from the N-terminus, the 172-residue chain is 3-hydroxydecanoyl-[acyl-carrier-protein] dehydratase (172 aa).

Residue H71 is part of the active site.

Belongs to the thioester dehydratase family. FabA subfamily. Homodimer.

The protein localises to the cytoplasm. It carries out the reaction a (3R)-hydroxyacyl-[ACP] = a (2E)-enoyl-[ACP] + H2O. It catalyses the reaction (3R)-hydroxydecanoyl-[ACP] = (2E)-decenoyl-[ACP] + H2O. The enzyme catalyses (2E)-decenoyl-[ACP] = (3Z)-decenoyl-[ACP]. It participates in lipid metabolism; fatty acid biosynthesis. Functionally, necessary for the introduction of cis unsaturation into fatty acids. Catalyzes the dehydration of (3R)-3-hydroxydecanoyl-ACP to E-(2)-decenoyl-ACP and then its isomerization to Z-(3)-decenoyl-ACP. Can catalyze the dehydratase reaction for beta-hydroxyacyl-ACPs with saturated chain lengths up to 16:0, being most active on intermediate chain length. The protein is 3-hydroxydecanoyl-[acyl-carrier-protein] dehydratase of Aliivibrio fischeri (strain ATCC 700601 / ES114) (Vibrio fischeri).